The following is an 88-amino-acid chain: Small ribosomal subunit protein bS20 (88 aa).

It belongs to the bacterial ribosomal protein bS20 family.

Binds directly to 16S ribosomal RNA. This chain is Small ribosomal subunit protein bS20, found in Blochmanniella floridana.